A 460-amino-acid polypeptide reads, in one-letter code: Glycine--tRNA ligase (460 aa).

Arg-99 and Glu-162 together coordinate substrate. Residues 194–196 (RNE), 204–209 (FRTREF), 281–282 (EL), and 325–328 (GVGR) contribute to the ATP site. 209–213 (FEQME) contacts substrate. 321–325 (EPAAG) lines the substrate pocket.

The protein belongs to the class-II aminoacyl-tRNA synthetase family. In terms of assembly, homodimer.

Its subcellular location is the cytoplasm. The enzyme catalyses tRNA(Gly) + glycine + ATP = glycyl-tRNA(Gly) + AMP + diphosphate. Its function is as follows. Catalyzes the attachment of glycine to tRNA(Gly). This is Glycine--tRNA ligase from Streptomyces coelicolor (strain ATCC BAA-471 / A3(2) / M145).